The sequence spans 268 residues: Large ribosomal subunit protein uL3 (268 aa).

Glutamine 156 carries the post-translational modification N5-methylglutamine. Low complexity predominate over residues 242–259 (VENEAAPADADNAAPEAA). The disordered stretch occupies residues 242–268 (VENEAAPADADNAAPEAAADGEEGTQA).

The protein belongs to the universal ribosomal protein uL3 family. As to quaternary structure, part of the 50S ribosomal subunit. Forms a cluster with proteins L14 and L19. In terms of processing, methylated by PrmB.

In terms of biological role, one of the primary rRNA binding proteins, it binds directly near the 3'-end of the 23S rRNA, where it nucleates assembly of the 50S subunit. The protein is Large ribosomal subunit protein uL3 of Maricaulis maris (strain MCS10) (Caulobacter maris).